Consider the following 3253-residue polypeptide: tRNA nuclease CdiA (3253 aa).

The first 32 residues, methionine 1 to alanine 32, serve as a signal peptide directing secretion. The tract at residues proline 36 to threonine 322 is two-partner system transport domain (TPS). The FHA-1 stretch occupies residues glycine 351 to asparagine 1384. Residues glutamine 1385–asparagine 1656 are receptor binding domain (RBD). The tract at residues tyrosine 1657 to asparagine 1841 is YP domain. The periplasmic FHA-1 repeat (pFR) stretch occupies residues glycine 1842–asparagine 1902. The FHA-2 stretch occupies residues threonine 1944–serine 2548. Disordered regions lie at residues glycine 2228–serine 2252, threonine 2362–arginine 2410, glycine 2483–valine 2503, and isoleucine 2687–serine 2712. Polar residues-rich tracts occupy residues glycine 2240 to serine 2252, threonine 2368 to valine 2403, and threonine 2490 to valine 2503. The pretoxin (PT) domain stretch occupies residues serine 2888 to alanine 2930. Residues valine 2931–asparagine 2934 carry the VDNN CT cleavage motif motif. A C-terminal effector domain (CT) region spans residues valine 2931–lysine 3253.

The protein in the N-terminal section; belongs to the CdiA toxin family. In the C-terminal section; belongs to the bacterial EndoU family. Forms a 1:1 complex with cognate immunity protein CdiI-STECO31. It depends on tRNase activity is metal-independent. as a cofactor. The CT domain is cleaved upon binding to receptor Tsx on target cells.

The protein resides in the secreted. Its subcellular location is the target cell. It localises to the target cell cytoplasm. In terms of biological role, toxic component of a toxin-immunity protein module, which functions as a cellular contact-dependent growth inhibition (CDI) system. CDI modules allow bacteria to communicate with and inhibit the growth of closely related neighboring target bacteria in a contact-dependent fashion (target cell counts decrease 1000- to 10000-fold with this CDI). Uses outer membrane nucleoside transporter Tsx on target cells as a receptor. Gains access to the cytoplasm of target cells by using integral inner membrane protein PTS system glucose-specific EIICB component (ptsG). Targeting of the C-terminal domain (CT) domain (residues 2931-3253) in the absence of immunity protein inhibits cell growth and causes tRNA(UUC-Glu) cleavage; expression of cognate immunity protein CdiI-STECO31 neutralizes growth inhibition leaving tRNA(UUC-Glu) is intact, whereas non-cognate immunity proteins do not confer protection. The CT domain cleaves tRNA; it is most active against tRNA(UUC-Glu), but also has modest activity against tRNA(GUC-Asp), tRNA(UUG-Gln), tRNA(CCC-Gly), tRNA(UCC-Gly), tRNA(GCC-Gly), tRNA(UUU-Lys), tRNA(GGU-Thr) and tRNA(CCA-Trp); tRNA cleavage is inhibited by cognate immunity protein CdiI. Cleavage of tRNA(UUC-Glu) occurs in the anticodon loop between cytosine(37) and 2-methyladenosine(38) (C37-m2A38) and probably also occurs in the anticodon loop of other tRNAs as well. Functionally, the CdiA protein is thought to be exported from the cell through the central lumen of CdiB, the other half of its two-partner system (TPS). The TPS domain probably remains associated with CdiB while the FHA-1 domain forms an extended filament (33 nm long) with the receptor-binding domain (RBD) at its extremity; in the secretion arrested state the C-terminus of the RBD and YP domains form a hairpin-like structure as the FHA-2, PT and CT domains are periplasmic. The YP domain is probably responsible for this arrest at the point where it re-enters the host cell periplasm. Upon binding to a target cell outer membrane receptor (Tsx for this CDI) a signal is transmitted to activate secretion. The filament becomes about 5 nm longer, the rest of CdiA is secreted and the FHA-2 domain becomes stably associated with the target cell's outer membrane where it facilitates entry of the toxic CT domain into the target cell periplasm. From there the toxic CT domain is cleaved and gains access to the target cell cytoplasm via an inner membrane protein (PTS system glucose-specific EIICB component, ptsG for this CDI). The protein is tRNA nuclease CdiA of Escherichia coli (strain STEC_O31).